We begin with the raw amino-acid sequence, 208 residues long: Small ribosomal subunit protein uS5 (208 aa).

Polar residues predominate over residues 1–15 (MTDSNNQSPNKKTSG). Residues 1 to 54 (MTDSNNQSPNKKTSGSSSAPPAADGRQENRRSRGEKRGGRRDRRGQERDSEWQE) form a disordered region. Composition is skewed to basic and acidic residues over residues 25-37 (GRQE…GEKR) and 44-54 (RGQERDSEWQE). One can recognise an S5 DRBM domain in the interval 52–115 (WQERVVQIRR…ADGKKHLVRV (64 aa)).

It belongs to the universal ribosomal protein uS5 family. In terms of assembly, part of the 30S ribosomal subunit. Contacts proteins S4 and S8.

In terms of biological role, with S4 and S12 plays an important role in translational accuracy. Located at the back of the 30S subunit body where it stabilizes the conformation of the head with respect to the body. The chain is Small ribosomal subunit protein uS5 from Prochlorococcus marinus (strain NATL2A).